A 238-amino-acid chain; its full sequence is MSEVTTAEFNEEGKYLRKIRSFVLREGRLTKGQAQAIESQWPTMGLDYSPVPLNLSEVFGREADTVLEIGFGMGASLVQMAKDAPEQNFIGIEVHKPGVGSCLSDAAIAGVTNLRVYHHDAMEVLEHAIADGSLARVQLFFPDPWHKKRHHKRRIVQAEFAELVRSKLKIGGVFHMATDWEEYSEHMLEVMNAAPGYKNQSVDDTVVPRPDHRPLTKFEARGHRLGHGVWDLMFERIV.

Residues Glu-68, Glu-93, Asp-120, and Asp-143 each contribute to the S-adenosyl-L-methionine site. Asp-143 is an active-site residue. Residues Lys-147, Asp-179, and 216–219 (TKFE) each bind substrate.

This sequence belongs to the class I-like SAM-binding methyltransferase superfamily. TrmB family.

The enzyme catalyses guanosine(46) in tRNA + S-adenosyl-L-methionine = N(7)-methylguanosine(46) in tRNA + S-adenosyl-L-homocysteine. The protein operates within tRNA modification; N(7)-methylguanine-tRNA biosynthesis. Functionally, catalyzes the formation of N(7)-methylguanine at position 46 (m7G46) in tRNA. This chain is tRNA (guanine-N(7)-)-methyltransferase, found in Shewanella sp. (strain W3-18-1).